Consider the following 363-residue polypeptide: Phosphoserine aminotransferase (363 aa).

Arg-42 is an L-glutamate binding site. Residues 76–77 (GR), Trp-102, Thr-156, Asp-175, and Gln-198 each bind pyridoxal 5'-phosphate. Lys-199 carries the N6-(pyridoxal phosphate)lysine modification. 240–241 (NT) serves as a coordination point for pyridoxal 5'-phosphate.

It belongs to the class-V pyridoxal-phosphate-dependent aminotransferase family. SerC subfamily. In terms of assembly, homodimer. The cofactor is pyridoxal 5'-phosphate.

Its subcellular location is the cytoplasm. It catalyses the reaction O-phospho-L-serine + 2-oxoglutarate = 3-phosphooxypyruvate + L-glutamate. The enzyme catalyses 4-(phosphooxy)-L-threonine + 2-oxoglutarate = (R)-3-hydroxy-2-oxo-4-phosphooxybutanoate + L-glutamate. The protein operates within amino-acid biosynthesis; L-serine biosynthesis; L-serine from 3-phospho-D-glycerate: step 2/3. It participates in cofactor biosynthesis; pyridoxine 5'-phosphate biosynthesis; pyridoxine 5'-phosphate from D-erythrose 4-phosphate: step 3/5. In terms of biological role, catalyzes the reversible conversion of 3-phosphohydroxypyruvate to phosphoserine and of 3-hydroxy-2-oxo-4-phosphonooxybutanoate to phosphohydroxythreonine. This Shewanella denitrificans (strain OS217 / ATCC BAA-1090 / DSM 15013) protein is Phosphoserine aminotransferase.